A 204-amino-acid polypeptide reads, in one-letter code: Holliday junction branch migration complex subunit RuvA (204 aa).

Residues 1–64 (MIGRLRGIIL…EDAQLLFGFN (64 aa)) form a domain I region. Residues 65 to 143 (SKPERALFRE…GMHGDLFASD (79 aa)) are domain II. Residues 144-155 (APFALTSEMPKE) form a flexible linker region. Residues 156–204 (TANDAEGEAVAALTALGYKPQEASRMIVKVGKPDADCETLIREALRAAI) form a domain III region.

This sequence belongs to the RuvA family. Homotetramer. Forms an RuvA(8)-RuvB(12)-Holliday junction (HJ) complex. HJ DNA is sandwiched between 2 RuvA tetramers; dsDNA enters through RuvA and exits via RuvB. An RuvB hexamer assembles on each DNA strand where it exits the tetramer. Each RuvB hexamer is contacted by two RuvA subunits (via domain III) on 2 adjacent RuvB subunits; this complex drives branch migration. In the full resolvosome a probable DNA-RuvA(4)-RuvB(12)-RuvC(2) complex forms which resolves the HJ.

It is found in the cytoplasm. Functionally, the RuvA-RuvB-RuvC complex processes Holliday junction (HJ) DNA during genetic recombination and DNA repair, while the RuvA-RuvB complex plays an important role in the rescue of blocked DNA replication forks via replication fork reversal (RFR). RuvA specifically binds to HJ cruciform DNA, conferring on it an open structure. The RuvB hexamer acts as an ATP-dependent pump, pulling dsDNA into and through the RuvAB complex. HJ branch migration allows RuvC to scan DNA until it finds its consensus sequence, where it cleaves and resolves the cruciform DNA. This is Holliday junction branch migration complex subunit RuvA from Erwinia tasmaniensis (strain DSM 17950 / CFBP 7177 / CIP 109463 / NCPPB 4357 / Et1/99).